The following is a 109-amino-acid chain: ATP-dependent Clp protease adapter protein ClpS (109 aa).

Positions 1 to 23 (MTERKHDDTGVEEGTGLATKTRP) are disordered.

It belongs to the ClpS family. Binds to the N-terminal domain of the chaperone ClpA.

Functionally, involved in the modulation of the specificity of the ClpAP-mediated ATP-dependent protein degradation. This chain is ATP-dependent Clp protease adapter protein ClpS, found in Maricaulis maris (strain MCS10) (Caulobacter maris).